Reading from the N-terminus, the 250-residue chain is Neurotrophic factor BDNF precursor form (250 aa).

Positions 1-18 are cleaved as a signal peptide; sequence MTILFLTMVISYFGCMKA. The propeptide occupies 19 to 131; it reads APMKEANLRA…AANMSMRVRR (113 aa). Intrachain disulfides connect C144–C211, C189–C240, and C199–C242.

It belongs to the NGF-beta family. As to quaternary structure, monomers and homodimers. Binds to NTRK2/TRKB. Can form heterodimers with other neurotrophin family members, such as NTF3 and NTF4 (in vitro), but the physiological relevance of this is not clear. BDNF precursor form: interacts with the heterodimer formed by NGFR and SORCS2. Mature BDNF has much lower affinity for the heterodimer formed by NGFR and SORCS2. In terms of processing, N-glycosylated and glycosulfated, contrary to mature BDNF. Mature BDNF is produced by proteolytic removal of the propeptide, catalyzed by a FURIN family member. In addition, the precursor form is proteolytically cleaved within the propeptide, but this is not an obligatory intermediate for the production of mature BDNF. Can be converted into mature BDNF by plasmin (PLG).

It is found in the secreted. Functionally, important signaling molecule that activates signaling cascades downstream of NTRK2. During development, promotes the survival and differentiation of selected neuronal populations of the peripheral and central nervous systems. Participates in axonal growth, pathfinding and in the modulation of dendritic growth and morphology. Major regulator of synaptic transmission and plasticity at adult synapses in many regions of the CNS. The versatility of BDNF is emphasized by its contribution to a range of adaptive neuronal responses including long-term potentiation (LTP), long-term depression (LTD), certain forms of short-term synaptic plasticity, as well as homeostatic regulation of intrinsic neuronal excitability. Its function is as follows. Important signaling molecule that activates signaling cascades downstream of NTRK2. Activates signaling cascades via the heterodimeric receptor formed by NGFR and SORCS2. Signaling via NGFR and SORCS2 plays a role in synaptic plasticity and long-term depression (LTD). Binding to NGFR and SORCS2 promotes neuronal apoptosis. Promotes neuronal growth cone collapse. The sequence is that of Neurotrophic factor BDNF precursor form (BDNF) from Bos taurus (Bovine).